The sequence spans 497 residues: UDP-N-acetylmuramoyl-L-alanyl-D-glutamate--2,6-diaminopimelate ligase (497 aa).

Ser-29 is a binding site for UDP-N-acetyl-alpha-D-muramoyl-L-alanyl-D-glutamate. 116–122 (GTNGKTT) contacts ATP. UDP-N-acetyl-alpha-D-muramoyl-L-alanyl-D-glutamate-binding positions include Asn-157, 158 to 159 (TT), Ser-185, Gln-191, and Arg-193. Lys-225 carries the N6-carboxylysine modification. Residues Arg-392, 416–419 (DNPR), Gly-467, and Glu-471 each bind meso-2,6-diaminopimelate. The short motif at 416–419 (DNPR) is the Meso-diaminopimelate recognition motif element.

The protein belongs to the MurCDEF family. MurE subfamily. It depends on Mg(2+) as a cofactor. Carboxylation is probably crucial for Mg(2+) binding and, consequently, for the gamma-phosphate positioning of ATP.

The protein resides in the cytoplasm. It catalyses the reaction UDP-N-acetyl-alpha-D-muramoyl-L-alanyl-D-glutamate + meso-2,6-diaminopimelate + ATP = UDP-N-acetyl-alpha-D-muramoyl-L-alanyl-gamma-D-glutamyl-meso-2,6-diaminopimelate + ADP + phosphate + H(+). It functions in the pathway cell wall biogenesis; peptidoglycan biosynthesis. Catalyzes the addition of meso-diaminopimelic acid to the nucleotide precursor UDP-N-acetylmuramoyl-L-alanyl-D-glutamate (UMAG) in the biosynthesis of bacterial cell-wall peptidoglycan. This chain is UDP-N-acetylmuramoyl-L-alanyl-D-glutamate--2,6-diaminopimelate ligase, found in Buchnera aphidicola subsp. Acyrthosiphon pisum (strain APS) (Acyrthosiphon pisum symbiotic bacterium).